The chain runs to 85 residues: MAHKKAGGSTRNGRDSESKRLGVKIFGGQAIRAGNIIVRQRGTQFHPGFGVGIGKDHTLFAKVEGVVKFEVKGAFGRRYVSVVPA.

Residues 1–20 form a disordered region; it reads MAHKKAGGSTRNGRDSESKR.

The protein belongs to the bacterial ribosomal protein bL27 family.

The polypeptide is Large ribosomal subunit protein bL27 (Azotobacter vinelandii (strain DJ / ATCC BAA-1303)).